The chain runs to 185 residues: Ribosome-recycling factor (185 aa).

The disordered stretch occupies residues 140-168 (KKEQKDGNITEDEQRNLEKQVQKITDDST).

It belongs to the RRF family.

It is found in the cytoplasm. Its function is as follows. Responsible for the release of ribosomes from messenger RNA at the termination of protein biosynthesis. May increase the efficiency of translation by recycling ribosomes from one round of translation to another. In Lactobacillus helveticus (strain DPC 4571), this protein is Ribosome-recycling factor.